A 65-amino-acid chain; its full sequence is Large ribosomal subunit protein bL35 (65 aa).

Composition is skewed to basic residues over residues 1 to 16 (MPKM…RFKK) and 31 to 45 (HRFH…RQLR). Residues 1–47 (MPKMKTHRASAKRFKKTANGGLKSASAYTSHRFHGKTKKQRRQLRGT) are disordered.

Belongs to the bacterial ribosomal protein bL35 family.

This chain is Large ribosomal subunit protein bL35, found in Leuconostoc citreum (strain KM20).